The sequence spans 425 residues: Aromatic prenyl transferase PC-22 (425 aa).

Residues Gly83–Ile84 and Glu92 each bind L-tryptophan. Residues Arg107, Lys198, Tyr200, Arg265, Lys267, Tyr269, Tyr345, Tyr410, and Tyr414 each contribute to the substrate site.

Belongs to the tryptophan dimethylallyltransferase family. As to quaternary structure, homodimer.

Its pathway is secondary metabolite biosynthesis. Functionally, aromatic prenyl transferase; part of the gene cluster that mediates the biosynthesis of the indole diterpenes penitrems. The geranylgeranyl diphosphate (GGPP) synthase penG catalyzes the first step in penitrem biosynthesis via conversion of farnesyl pyrophosphate and isopentyl pyrophosphate into geranylgeranyl pyrophosphate (GGPP). Condensation of indole-3-glycerol phosphate with GGPP by the prenyl transferase penC then forms 3-geranylgeranylindole (3-GGI). Epoxidation by the FAD-dependent monooxygenase penM leads to a epoxidized-GGI that is substrate of the terpene cyclase penB for cyclization to yield paspaline. Paspaline is subsequently converted to 13-desoxypaxilline by the cytochrome P450 monooxygenase penP, the latter being then converted to paxilline by the cytochrome P450 monooxygenase penQ. Paxilline is converted to beta-paxitriol via C-10 ketoreduction by the short-chain dehydrogenase PC-15 which can be monoprenylated at the C-20 by the indole diterpene prenyltransferase penD. A two-step elimination (acetylation and elimination) process performed by the O-acetyltransferase PC-16 and the P.simplicissimum ptmI-ortholog not yet identified in P.crustosum, leads to the production of the prenylated form of penijanthine. The FAD-linked oxidoreductase ptmO then converts the prenylated form of penijanthine into PC-M5 which is in turn transformed into PC-M4 by the aromatic dimethylallyltransferase PC-22. A series of oxidation steps involving 4 cytochrome P450 monooxygenases (PC-21, PC-05, PC-23, PC-20) and a FAD-dependent monooxygenase (PC-14) are required for the transformation of PC-M4 to penitrems A and E. Synthesis of these final products is proposed to proceed via penitrems D and C (PC-21, PC-05, PC-14) and penitrems B and F (PC-21, PC-05, PC-14, PC-23). The protein is Aromatic prenyl transferase PC-22 of Penicillium crustosum (Blue mold fungus).